The primary structure comprises 584 residues: Levansucrase (584 aa).

The N-terminal stretch at 1–30 (MAHVRRKVATLNMALAGSLLMVLGAQSALA) is a signal peptide. Glutamine 31 carries the pyrrolidone carboxylic acid modification. 5 residues coordinate sucrose: tryptophan 134, aspartate 135, serine 225, arginine 308, and aspartate 309. The active-site Nucleophile is aspartate 135. Cysteine 339 and cysteine 395 are disulfide-bonded. Glutamate 401 (proton donor/acceptor) is an active-site residue.

It belongs to the glycosyl hydrolase 68 family. Monomer. The N-terminus is blocked. The N-terminal Gln is cyclized to a pyroglutamic acid.

It localises to the secreted. It catalyses the reaction [6)-beta-D-fructofuranosyl-(2-&gt;](n) alpha-D-glucopyranoside + sucrose = [6)-beta-D-fructofuranosyl-(2-&gt;](n+1) alpha-D-glucopyranoside + D-glucose. Its activity is regulated as follows. Strongly inhibited by Hg(2+) and slightly activated by Co(2+). Not inhibited by the metal ion chelator EDTA, suggesting that this enzyme does not need a metal cofactor. Functionally, catalyzes the synthesis of levan, a fructose polymer, by transferring the fructosyl moiety from sucrose to a growing acceptor molecule. Also displays sucrose hydrolase activity. In vitro, catalyzes transfructosylation from sucrose to a variety of acceptors including water (sucrose hydrolysis), glucose (exchange reaction), fructan (polymerase reaction) and sucrose (oligofructoside synthesis). Levansucrase of G.diazotrophicus SRT4, unlike the enzyme of B.subtilis, causes accumulation of large quantities of tri- and tetrasaccharides but small quantities of high-molecular-mass levan. It may act more as a sucrose hydrolase than as a fructan polymerase, and may be the key enzyme in the sucrose metabolism of G.diazotrophicus SRT4. The polypeptide is Levansucrase (Gluconacetobacter diazotrophicus (Acetobacter diazotrophicus)).